Reading from the N-terminus, the 542-residue chain is Probable spastin homolog spas-1 (542 aa).

Residues 29–66 are a coiled coil; that stretch reads RAAIEMDELTKQNGTINEKLQTAELYKQARQMLKEANE. Positions 131-177 are disordered; it reads ATVPGDKKVSKVKQTEKAPHVCSRGDRCGAHQPPPEKKSTPLKPVNQ. Positions 135–169 are enriched in basic and acidic residues; it reads GDKKVSKVKQTEKAPHVCSRGDRCGAHQPPPEKKS. 309–316 provides a ligand contact to ATP; it reads GPPGNGKT.

The protein belongs to the AAA ATPase family. Spastin subfamily. Homohexamer. The homohexamer is stabilized by ATP-binding. The homohexamer may adopt a ring conformation through which microtubules pass prior to being severed. Interacts with microtubules.

It localises to the cytoplasm. The protein resides in the cytoskeleton. Its subcellular location is the perinuclear region. It carries out the reaction n ATP + n H2O + a microtubule = n ADP + n phosphate + (n+1) alpha/beta tubulin heterodimers.. Its function is as follows. Severs microtubules, probably in an ATP-dependent fashion. In Caenorhabditis briggsae, this protein is Probable spastin homolog spas-1 (spas-1).